The following is a 329-amino-acid chain: Beta-tectorin (329 aa).

The signal sequence occupies residues 1–17; it reads MVVRAFVLLALFAEASA. In terms of domain architecture, ZP spans 19–283; that stretch reads SCTPNKADVI…LSCPVNCDKR (265 aa). 4 N-linked (GlcNAc...) asparagine glycosylation sites follow: N80, N104, N116, and N145. Cysteines 204 and 264 form a disulfide. A lipid anchor (GPI-anchor amidated alanine) is attached at A305. The propeptide at 306–329 is removed in mature form; that stretch reads FSGLCDFSDVLLHLILMLGTWAVL.

May form homomeric filament after self-association or heteromeric filament after association with alpha-tectorin. Interacts with CEACAM16. In terms of processing, the presence of a hydrophobic C-terminus preceded by a potential cleavage site strongly suggests that tectorins are synthesized as glycosylphosphatidylinositol-linked, membrane-bound precursors. Tectorins are targeted to the apical surface of the inner ear epithelia by the lipid and proteolytically released into the extracellular compartment.

It is found in the cell membrane. The protein localises to the secreted. It localises to the extracellular space. Its subcellular location is the extracellular matrix. Its function is as follows. One of the major non-collagenous components of the tectorial membrane. The tectorial membrane is an extracellular matrix of the inner ear that covers the neuroepithelium of the cochlea and contacts the stereocilia bundles of specialized sensory hair cells. Sound induces movement of these hair cells relative to the tectorial membrane, deflects the stereocilia and leads to fluctuations in hair-cell membrane potential, transducing sound into electrical signals. This is Beta-tectorin (Tectb) from Mus musculus (Mouse).